We begin with the raw amino-acid sequence, 150 residues long: SsrA-binding protein (150 aa).

The protein belongs to the SmpB family.

Its subcellular location is the cytoplasm. In terms of biological role, required for rescue of stalled ribosomes mediated by trans-translation. Binds to transfer-messenger RNA (tmRNA), required for stable association of tmRNA with ribosomes. tmRNA and SmpB together mimic tRNA shape, replacing the anticodon stem-loop with SmpB. tmRNA is encoded by the ssrA gene; the 2 termini fold to resemble tRNA(Ala) and it encodes a 'tag peptide', a short internal open reading frame. During trans-translation Ala-aminoacylated tmRNA acts like a tRNA, entering the A-site of stalled ribosomes, displacing the stalled mRNA. The ribosome then switches to translate the ORF on the tmRNA; the nascent peptide is terminated with the 'tag peptide' encoded by the tmRNA and targeted for degradation. The ribosome is freed to recommence translation, which seems to be the essential function of trans-translation. In Nitratiruptor sp. (strain SB155-2), this protein is SsrA-binding protein.